The sequence spans 118 residues: Small ribosomal subunit protein uS13 (118 aa).

A disordered region spans residues 94–118 (SLPLRGQRTKTNARTRKGPRKPIKK).

It belongs to the universal ribosomal protein uS13 family. Part of the 30S ribosomal subunit. Forms a loose heterodimer with protein S19. Forms two bridges to the 50S subunit in the 70S ribosome.

Its function is as follows. Located at the top of the head of the 30S subunit, it contacts several helices of the 16S rRNA. In the 70S ribosome it contacts the 23S rRNA (bridge B1a) and protein L5 of the 50S subunit (bridge B1b), connecting the 2 subunits; these bridges are implicated in subunit movement. Contacts the tRNAs in the A and P-sites. This chain is Small ribosomal subunit protein uS13, found in Vibrio cholerae serotype O1 (strain ATCC 39315 / El Tor Inaba N16961).